The sequence spans 113 residues: TYRO protein tyrosine kinase-binding protein (113 aa).

The first 21 residues, 1–21, serve as a signal peptide directing secretion; that stretch reads MGGLEPCSRLLLLPLLLAVSG. At 22–40 the chain is on the extracellular side; it reads LRPVQAQAQSDCSCSTVSP. A helical transmembrane segment spans residues 41-61; that stretch reads GVLAGIVMGDLVLTVLIALAV. Aspartate 50 contacts Ca(2+). The Cytoplasmic segment spans residues 62–113; the sequence is YFLGRLVPRGRGAAEAATRKQRITETESPYQELQGQRSDVYSDLNTQRPYYK. Residues 75–113 are disordered; that stretch reads AEAATRKQRITETESPYQELQGQRSDVYSDLNTQRPYYK. The ITAM domain occupies 80 to 108; sequence RKQRITETESPYQELQGQRSDVYSDLNTQ. Residues 87–113 show a composition bias toward polar residues; it reads TESPYQELQGQRSDVYSDLNTQRPYYK. A phosphotyrosine mark is found at tyrosine 91 and tyrosine 102.

This sequence belongs to the TYROBP family. Homodimer; disulfide-linked. Homotrimer; disulfide-linked. Homotetramer; disulfide-linked. Homotrimers and homotetramers form when low levels of partner receptors are available and are competitive with assembly with interacting receptors. They may represent alternative oligomerization states or may be intermediates in the receptor assembly process. Binding of a metal cation aids in homooligomerization through coordination of the metal ion by the subunits of the oligomer. Interacts with TREM1. Interacts with TREM2. Interacts with SIRPB1. Interacts with CLECSF5. Interacts with SIGLEC14. Interacts with CD300LB and CD300E. Interacts with CD300C2. Interacts (via ITAM domain) with SYK (via SH2 domains); activates SYK mediating neutrophil and macrophage integrin-mediated activation. Interacts with KLRC2, KIR2DS3 and KIR2DS5. Interacts with CD300H. Interacts with KIR2DS1. Interacts with KLRD1. Interacts with SIGLEC1. Post-translationally, following ligand binding by associated receptors, tyrosine phosphorylated in the ITAM domain which leads to activation of additional tyrosine kinases and subsequent cell activation. As to expression, expressed at low levels in the early development of the hematopoietic system and in the promonocytic stage and at high levels in mature monocytes. Expressed in hematological cells and tissues such as peripheral blood leukocytes and spleen. Also found in bone marrow, lymph nodes, placenta, lung and liver. Expressed at lower levels in different parts of the brain especially in the basal ganglia and corpus callosum.

The protein localises to the cell membrane. Adapter protein which non-covalently associates with activating receptors found on the surface of a variety of immune cells to mediate signaling and cell activation following ligand binding by the receptors. TYROBP is tyrosine-phosphorylated in the ITAM domain following ligand binding by the associated receptors which leads to activation of additional tyrosine kinases and subsequent cell activation. Also has an inhibitory role in some cells. Non-covalently associates with activating receptors of the CD300 family to mediate cell activation. Also mediates cell activation through association with activating receptors of the CD200R family. Required for neutrophil activation mediated by integrin. Required for the activation of myeloid cells mediated by the CLEC5A/MDL1 receptor. Associates with natural killer (NK) cell receptors such as KIR2DS2 and the KLRD1/KLRC2 heterodimer to mediate NK cell activation. Also enhances trafficking and cell surface expression of NK cell receptors KIR2DS1, KIR2DS2 and KIR2DS4 and ensures their stability at the cell surface. Associates with SIRPB1 to mediate activation of myeloid cells such as monocytes and dendritic cells. Associates with TREM1 to mediate activation of neutrophils and monocytes. Associates with TREM2 on monocyte-derived dendritic cells to mediate up-regulation of chemokine receptor CCR7 and dendritic cell maturation and survival. Association with TREM2 mediates cytokine-induced formation of multinucleated giant cells which are formed by the fusion of macrophages. Stabilizes the TREM2 C-terminal fragment (TREM2-CTF) produced by TREM2 ectodomain shedding which suppresses the release of pro-inflammatory cytokines. In microglia, required with TREM2 for phagocytosis of apoptotic neurons. Required with ITGAM/CD11B in microglia to control production of microglial superoxide ions which promote the neuronal apoptosis that occurs during brain development. Promotes pro-inflammatory responses in microglia following nerve injury which accelerates degeneration of injured neurons. Positively regulates the expression of the IRAK3/IRAK-M kinase and IL10 production by liver dendritic cells and inhibits their T cell allostimulatory ability. Negatively regulates B cell proliferation. Required for CSF1-mediated osteoclast cytoskeletal organization. Positively regulates multinucleation during osteoclast development. This is TYRO protein tyrosine kinase-binding protein from Homo sapiens (Human).